A 307-amino-acid polypeptide reads, in one-letter code: Protoheme IX farnesyltransferase (307 aa).

The next 9 membrane-spanning stretches (helical) occupy residues 29 to 49 (VISL…RGWP), 51 to 71 (LGLL…AGVF), 101 to 120 (AAIF…WVWA), 124 to 143 (AAWM…TLWL), 151 to 171 (IVLG…AVTG), 179 to 199 (FLFA…ALMI), 218 to 238 (RLTV…SVMP), 239 to 259 (VFLG…GWLL), and 280 to 300 (VAVP…VAGA).

The protein belongs to the UbiA prenyltransferase family. Protoheme IX farnesyltransferase subfamily.

The protein localises to the cell membrane. It carries out the reaction heme b + (2E,6E)-farnesyl diphosphate + H2O = Fe(II)-heme o + diphosphate. The protein operates within porphyrin-containing compound metabolism; heme O biosynthesis; heme O from protoheme: step 1/1. Converts heme B (protoheme IX) to heme O by substitution of the vinyl group on carbon 2 of heme B porphyrin ring with a hydroxyethyl farnesyl side group. The chain is Protoheme IX farnesyltransferase from Deinococcus geothermalis (strain DSM 11300 / CIP 105573 / AG-3a).